A 458-amino-acid chain; its full sequence is ATP synthase subunit beta (458 aa).

Residue 148-155 participates in ATP binding; sequence GGAGVGKT.

The protein belongs to the ATPase alpha/beta chains family. F-type ATPases have 2 components, CF(1) - the catalytic core - and CF(0) - the membrane proton channel. CF(1) has five subunits: alpha(3), beta(3), gamma(1), delta(1), epsilon(1). CF(0) has three main subunits: a(1), b(2) and c(9-12). The alpha and beta chains form an alternating ring which encloses part of the gamma chain. CF(1) is attached to CF(0) by a central stalk formed by the gamma and epsilon chains, while a peripheral stalk is formed by the delta and b chains.

It is found in the cell inner membrane. It catalyses the reaction ATP + H2O + 4 H(+)(in) = ADP + phosphate + 5 H(+)(out). Functionally, produces ATP from ADP in the presence of a proton gradient across the membrane. The catalytic sites are hosted primarily by the beta subunits. This chain is ATP synthase subunit beta, found in Pseudomonas putida (strain GB-1).